The sequence spans 306 residues: MFALAQHTARRTLSRQQWTKVVVSAANYSSGSLSSTIRISSIPAPHTGEITVLSLNRPRARNAISTALLGELNTVVEQLHAQGDKSSTRALILTSESDDAFCAGADLKERLTFTEEDTRNFLKTLRHTFTRLSTLPIPTISAISSIAFGGGLELALCTNFRVLASTASIGLPETRLAIIPGGGGTYRLPALIGETRARDLILTGRRVSGEEAYFIGLADRLVQISEQELGEKGVARGRVLEEATAMAKGICEGGPVAIRAAQAAVSGWRDGEGSENKAYERVIPTKDRLEALTAFGEKRKPSFQGR.

Residues 103–107 (AGADL) and G150 each bind substrate.

This sequence belongs to the enoyl-CoA hydratase/isomerase family.

The catalysed reaction is a (3S)-3-hydroxyacyl-CoA = a (2E)-enoyl-CoA + H2O. It catalyses the reaction a 4-saturated-(3S)-3-hydroxyacyl-CoA = a (3E)-enoyl-CoA + H2O. The protein operates within siderophore biosynthesis. In terms of biological role, enoyl-CoA isomerase/hydratase involved in the biosynthesis of a ferrichrome A-like siderophore which may contribute to organismal virulence. The first step of siderophore biosynthesis is performed by the HMG-CoA synthase (HMGS) MYCGRDRAFT_54740 which catalyzes the generation of HMG-CoA and CoA using acetoacetyl-CoA and acetyl-CoA as substrates. The enoyl-CoA isomerase/hydratase MYCGRDRAFT_76805 then catalyzes the conversion of HMG-CoA to methylglutaconyl-CoA. The acyltransferase MYCGRDRAFT_85486 then fuses methylglutaconyl-CoA with hydroxyornithine to yield methylglutaconyl hydroxyornithine. Methylglutaconyl hydroxyornithine is then available for use by the nonribosomal peptide synthetase NRPS2 to generate the ferrichrome A-like siderophore. The sequence is that of Enoyl-CoA isomerase/hydratase MYCGRDRAFT_76805 from Zymoseptoria tritici (strain CBS 115943 / IPO323) (Speckled leaf blotch fungus).